A 329-amino-acid chain; its full sequence is GTP 3',8-cyclase (329 aa).

Positions 8–234 (AFARKFYYLR…QLRQRSDGPA (227 aa)) constitute a Radical SAM core domain. Residue R17 coordinates GTP. The [4Fe-4S] cluster site is built by C24 and C28. Y30 serves as a coordination point for S-adenosyl-L-methionine. C31 contributes to the [4Fe-4S] cluster binding site. R68 is a binding site for GTP. S-adenosyl-L-methionine is bound at residue G72. Residue T99 coordinates GTP. S-adenosyl-L-methionine is bound at residue S123. Position 160 (K160) interacts with GTP. Position 194 (M194) interacts with S-adenosyl-L-methionine. Positions 257 and 260 each coordinate [4Fe-4S] cluster. 262–264 (RLR) is a binding site for GTP. C274 serves as a coordination point for [4Fe-4S] cluster.

The protein belongs to the radical SAM superfamily. MoaA family. In terms of assembly, monomer and homodimer. It depends on [4Fe-4S] cluster as a cofactor.

The enzyme catalyses GTP + AH2 + S-adenosyl-L-methionine = (8S)-3',8-cyclo-7,8-dihydroguanosine 5'-triphosphate + 5'-deoxyadenosine + L-methionine + A + H(+). It participates in cofactor biosynthesis; molybdopterin biosynthesis. Functionally, catalyzes the cyclization of GTP to (8S)-3',8-cyclo-7,8-dihydroguanosine 5'-triphosphate. The polypeptide is GTP 3',8-cyclase (Escherichia coli O127:H6 (strain E2348/69 / EPEC)).